Consider the following 270-residue polypeptide: MGLSPAASGEFGIRLSRVPWPRPTQISKTSSTESSDTQSATGQSTVPHSDSASSQALLVQFLPKQLKQDRRLEQARSFQQGEKPETSLELTPSKKRTELIPTSNSEIESTQKNQAVEGNPRPRPGDLIEIFRIGYEHWAIYVEDDCVVHLAPPSEFEAGSITSIFSNRAVVKYSRLEDVLHGCSWKINNKLDGTYLPLPVDKIMQRTKNMINKIVQYSLIEGNCEHFVNDLRYGVPRSQQVEHALVEGAKAAGAVLSAVVDSIRPKPITA.

2 disordered regions span residues M1–S54 and R70–P122. Polar residues-rich tracts occupy residues T24–S54 and I100–V116. One can recognise an LRAT domain in the interval L127–Q240. Active-site residues include H137 and H149. C224 acts as the Acyl-thioester intermediate in catalysis.

The protein belongs to the H-rev107 family. Isoform 4 shows highest expression level in testis.

It localises to the cytoplasm. Its subcellular location is the cytosol. It catalyses the reaction a 1,2-diacyl-sn-glycero-3-phosphocholine + H2O = a 1-acyl-sn-glycero-3-phosphocholine + a fatty acid + H(+). The enzyme catalyses a 1,2-diacyl-sn-glycero-3-phosphocholine + H2O = a 2-acyl-sn-glycero-3-phosphocholine + a fatty acid + H(+). It carries out the reaction 1-hexadecanoyl-2-(5Z,8Z,11Z,14Z-eicosatetraenoyl)-sn-glycero-3-phosphocholine + 1,2-di-(9Z-octadecenoyl)-sn-glycero-3-phosphoethanolamine = N-(5Z,8Z,11Z,14Z-eicosatetraenoyl)-1,2-di-(9Z-octadecenoyl)-sn-glycero-3-phosphoethanolamine + 1-hexadecanoyl-sn-glycero-3-phosphocholine + H(+). The catalysed reaction is 1,2-di-(9Z-octadecenoyl)-sn-glycero-3-phosphoethanolamine + 1,2-dihexadecanoyl-sn-glycero-3-phosphocholine = N-hexadecanoyl-1,2-di-(9Z-octadecenoyl)-sn-glycero-3-phosphoethanolamine + 1-hexadecanoyl-sn-glycero-3-phosphocholine + H(+). It catalyses the reaction 1,2-di-(9Z-octadecenoyl)-sn-glycero-3-phosphoethanolamine + 1,2-dihexadecanoyl-sn-glycero-3-phosphocholine = N-hexadecanoyl-1,2-di-(9Z-octadecenoyl)-sn-glycero-3-phosphoethanolamine + 2-hexadecanoyl-sn-glycero-3-phosphocholine + H(+). The enzyme catalyses a 1,2-diacyl-sn-glycero-3-phosphoethanolamine + a 1,2-diacyl-sn-glycero-3-phosphocholine = an N-acyl-1,2-diacyl-sn-glycero-3-phosphoethanolamine + a 1-acyl-sn-glycero-3-phosphocholine + H(+). It carries out the reaction a 1,2-diacyl-sn-glycero-3-phosphoethanolamine + a 1,2-diacyl-sn-glycero-3-phosphocholine = an N-acyl-1,2-diacyl-sn-glycero-3-phosphoethanolamine + a 2-acyl-sn-glycero-3-phosphocholine + H(+). The catalysed reaction is 1-hexadecanoyl-2-(9Z-octadecenoyl)-sn-glycero-3-phosphocholine + 1,2-di-(9Z-octadecenoyl)-sn-glycero-3-phosphoethanolamine = N,1,2-tri-(9Z-octadecenoyl)-sn-glycero-3-phosphoethanolamine + 1-hexadecanoyl-sn-glycero-3-phosphocholine + H(+). Its function is as follows. Exhibits both phospholipase A1/2 and acyltransferase activities. Shows phospholipase A1 (PLA1) and A2 (PLA2) activity, catalyzing the calcium-independent release of fatty acids from the sn-1 or sn-2 position of glycerophospholipids. Shows N-acyltransferase activity, catalyzing the calcium-independent transfer of a fatty acyl group at the sn-1 position of phosphatidylcholine (PC) and other glycerophospholipids to the primary amine of phosphatidylethanolamine (PE), forming N-acylphosphatidylethanolamine (NAPE), which serves as precursor for N-acylethanolamines (NAEs). The protein is Phospholipase A and acyltransferase 5 of Mus musculus (Mouse).